The primary structure comprises 160 residues: SsrA-binding protein (160 aa).

The disordered stretch occupies residues 130 to 160 (LAKGKKKHDKRADQKEQDWQRQKQRLMKHKV). Residues 139-150 (KRADQKEQDWQR) show a composition bias toward basic and acidic residues. Positions 151–160 (QKQRLMKHKV) are enriched in basic residues.

It belongs to the SmpB family.

It localises to the cytoplasm. In terms of biological role, required for rescue of stalled ribosomes mediated by trans-translation. Binds to transfer-messenger RNA (tmRNA), required for stable association of tmRNA with ribosomes. tmRNA and SmpB together mimic tRNA shape, replacing the anticodon stem-loop with SmpB. tmRNA is encoded by the ssrA gene; the 2 termini fold to resemble tRNA(Ala) and it encodes a 'tag peptide', a short internal open reading frame. During trans-translation Ala-aminoacylated tmRNA acts like a tRNA, entering the A-site of stalled ribosomes, displacing the stalled mRNA. The ribosome then switches to translate the ORF on the tmRNA; the nascent peptide is terminated with the 'tag peptide' encoded by the tmRNA and targeted for degradation. The ribosome is freed to recommence translation, which seems to be the essential function of trans-translation. The chain is SsrA-binding protein from Alkalilimnicola ehrlichii (strain ATCC BAA-1101 / DSM 17681 / MLHE-1).